Consider the following 149-residue polypeptide: Inner membrane protein YdcZ (149 aa).

Residues 1–4 lie on the Periplasmic side of the membrane; the sequence is MNQS. A helical transmembrane segment spans residues 5–25; it reads LTLAFLIAAGIGLVVQNTLMV. Topologically, residues 26–33 are cytoplasmic; sequence RITQTSST. A helical transmembrane segment spans residues 34-54; it reads ILIAMLLNSLVGIVLFVSILW. The Periplasmic portion of the chain corresponds to 55 to 70; the sequence is FKQGMAGFGELVSSVR. A helical transmembrane segment spans residues 71-91; sequence WWTLIPGLLGSFFVFASISGY. The Cytoplasmic portion of the chain corresponds to 92–93; the sequence is QN. The chain crosses the membrane as a helical span at residues 94–114; it reads VGAATTIAVLVASQLIGGLML. Residues 115–123 lie on the Periplasmic side of the membrane; it reads DIFRSHGVP. A helical transmembrane segment spans residues 124-144; that stretch reads LRALFGPICGAILLVVGAWLV. The Cytoplasmic portion of the chain corresponds to 145-149; sequence ARRSF.

The protein localises to the cell inner membrane. This Escherichia coli (strain K12) protein is Inner membrane protein YdcZ (ydcZ).